A 631-amino-acid chain; its full sequence is Phosphomethylpyrimidine synthase (631 aa).

A disordered region spans residues T54 to Y80. Residues G58–T67 are compositionally biased toward basic and acidic residues. Residues N239, M268, Y297, H333, S353–G355, D394–R397, and E433 contribute to the substrate site. H437 contacts Zn(2+). Substrate is bound at residue Y460. H501 contacts Zn(2+). 3 residues coordinate [4Fe-4S] cluster: C581, C584, and C589.

This sequence belongs to the ThiC family. As to quaternary structure, homodimer. It depends on [4Fe-4S] cluster as a cofactor.

The catalysed reaction is 5-amino-1-(5-phospho-beta-D-ribosyl)imidazole + S-adenosyl-L-methionine = 4-amino-2-methyl-5-(phosphooxymethyl)pyrimidine + CO + 5'-deoxyadenosine + formate + L-methionine + 3 H(+). Its pathway is cofactor biosynthesis; thiamine diphosphate biosynthesis. Catalyzes the synthesis of the hydroxymethylpyrimidine phosphate (HMP-P) moiety of thiamine from aminoimidazole ribotide (AIR) in a radical S-adenosyl-L-methionine (SAM)-dependent reaction. This Klebsiella pneumoniae subsp. pneumoniae (strain ATCC 700721 / MGH 78578) protein is Phosphomethylpyrimidine synthase.